A 473-amino-acid polypeptide reads, in one-letter code: Aspartyl/glutamyl-tRNA(Asn/Gln) amidotransferase subunit B (473 aa).

It belongs to the GatB/GatE family. GatB subfamily. As to quaternary structure, heterotrimer of A, B and C subunits.

The enzyme catalyses L-glutamyl-tRNA(Gln) + L-glutamine + ATP + H2O = L-glutaminyl-tRNA(Gln) + L-glutamate + ADP + phosphate + H(+). It carries out the reaction L-aspartyl-tRNA(Asn) + L-glutamine + ATP + H2O = L-asparaginyl-tRNA(Asn) + L-glutamate + ADP + phosphate + 2 H(+). Functionally, allows the formation of correctly charged Asn-tRNA(Asn) or Gln-tRNA(Gln) through the transamidation of misacylated Asp-tRNA(Asn) or Glu-tRNA(Gln) in organisms which lack either or both of asparaginyl-tRNA or glutaminyl-tRNA synthetases. The reaction takes place in the presence of glutamine and ATP through an activated phospho-Asp-tRNA(Asn) or phospho-Glu-tRNA(Gln). The sequence is that of Aspartyl/glutamyl-tRNA(Asn/Gln) amidotransferase subunit B from Finegoldia magna (strain ATCC 29328 / DSM 20472 / WAL 2508) (Peptostreptococcus magnus).